The sequence spans 488 residues: Aspartyl/glutamyl-tRNA(Asn/Gln) amidotransferase subunit B (488 aa).

The protein belongs to the GatB/GatE family. GatB subfamily. Heterotrimer of A, B and C subunits.

The catalysed reaction is L-glutamyl-tRNA(Gln) + L-glutamine + ATP + H2O = L-glutaminyl-tRNA(Gln) + L-glutamate + ADP + phosphate + H(+). The enzyme catalyses L-aspartyl-tRNA(Asn) + L-glutamine + ATP + H2O = L-asparaginyl-tRNA(Asn) + L-glutamate + ADP + phosphate + 2 H(+). Functionally, allows the formation of correctly charged Asn-tRNA(Asn) or Gln-tRNA(Gln) through the transamidation of misacylated Asp-tRNA(Asn) or Glu-tRNA(Gln) in organisms which lack either or both of asparaginyl-tRNA or glutaminyl-tRNA synthetases. The reaction takes place in the presence of glutamine and ATP through an activated phospho-Asp-tRNA(Asn) or phospho-Glu-tRNA(Gln). The polypeptide is Aspartyl/glutamyl-tRNA(Asn/Gln) amidotransferase subunit B (Neorickettsia sennetsu (strain ATCC VR-367 / Miyayama) (Ehrlichia sennetsu)).